Reading from the N-terminus, the 348-residue chain is Fe-S cluster assembly protein DRE2 (348 aa).

Residues 1–158 (MSQYKTGLLL…LPTFKKASSS (158 aa)) form an N-terminal SAM-like domain region. A disordered region spans residues 137–170 (KTNNTKLQSGSKLPTFKKASSSTSNLPSFKKADH). Over residues 144–163 (QSGSKLPTFKKASSSTSNLP) the composition is skewed to polar residues. The segment at 159–242 (TSNLPSFKKA…EEELIDEDGS (84 aa)) is linker. Serine 206 is subject to Phosphoserine. Positions 252, 263, 266, and 268 each coordinate [2Fe-2S] cluster. A fe-S binding site A region spans residues 252 to 268 (CGKSKTKKKKACKDCTC). 4 residues coordinate [4Fe-4S] cluster: cysteine 311, cysteine 314, cysteine 322, and cysteine 325. 2 short sequence motifs (cx2C motif) span residues 311–314 (CGSC) and 322–325 (CSGC). The tract at residues 311–325 (CGSCSLGDAFRCSGC) is fe-S binding site B.

The protein belongs to the anamorsin family. As to quaternary structure, monomer. Interacts with TAH18. Interacts with MIA40. [2Fe-2S] cluster serves as cofactor. [4Fe-4S] cluster is required as a cofactor. In terms of processing, ubiquitinated.

It is found in the cytoplasm. Its subcellular location is the mitochondrion intermembrane space. Its function is as follows. Component of the cytosolic iron-sulfur (Fe-S) protein assembly (CIA) machinery required for the maturation of extramitochondrial Fe-S proteins. Part of an electron transfer chain functioning in an early step of cytosolic Fe-S biogenesis, facilitating the de novo assembly of a [4Fe-4S] cluster on the scaffold complex CFD1-NBP35. Electrons are transferred to DRE2 from NADPH via the FAD- and FMN-containing protein TAH18. TAH18-DRE2 are also required for the assembly of the diferric tyrosyl radical cofactor of ribonucleotide reductase (RNR), probably by providing electrons for reduction during radical cofactor maturation in the catalytic small subunit RNR2. Has anti-apoptotic effects in the cell. Involved in negative control of H(2)O(2)-induced cell death. The chain is Fe-S cluster assembly protein DRE2 from Saccharomyces cerevisiae (strain ATCC 204508 / S288c) (Baker's yeast).